A 556-amino-acid chain; its full sequence is Potassium-transporting ATPase potassium-binding subunit (556 aa).

10 helical membrane passes run Leu-5–Leu-25, Ser-65–Gly-85, Gly-133–Val-153, Ile-176–Ile-196, Pro-249–Pro-269, Tyr-283–Phe-303, Ala-377–Val-397, Leu-415–Met-435, Ala-483–Ala-503, and Phe-526–Leu-546.

Belongs to the KdpA family. As to quaternary structure, the system is composed of three essential subunits: KdpA, KdpB and KdpC.

Its subcellular location is the cell membrane. Functionally, part of the high-affinity ATP-driven potassium transport (or Kdp) system, which catalyzes the hydrolysis of ATP coupled with the electrogenic transport of potassium into the cytoplasm. This subunit binds the extracellular potassium ions and delivers the ions to the membrane domain of KdpB through an intramembrane tunnel. The polypeptide is Potassium-transporting ATPase potassium-binding subunit (Mycolicibacterium vanbaalenii (strain DSM 7251 / JCM 13017 / BCRC 16820 / KCTC 9966 / NRRL B-24157 / PYR-1) (Mycobacterium vanbaalenii)).